The chain runs to 61 residues: UPF0434 protein PSPTO_3844 (61 aa).

This sequence belongs to the UPF0434 family.

The chain is UPF0434 protein PSPTO_3844 from Pseudomonas syringae pv. tomato (strain ATCC BAA-871 / DC3000).